The following is a 156-amino-acid chain: Small ribosomal subunit protein uS7 (156 aa).

It belongs to the universal ribosomal protein uS7 family. As to quaternary structure, part of the 30S ribosomal subunit. Contacts proteins S9 and S11.

In terms of biological role, one of the primary rRNA binding proteins, it binds directly to 16S rRNA where it nucleates assembly of the head domain of the 30S subunit. Is located at the subunit interface close to the decoding center, probably blocks exit of the E-site tRNA. In Clostridium botulinum (strain Alaska E43 / Type E3), this protein is Small ribosomal subunit protein uS7.